An 84-amino-acid chain; its full sequence is ATP synthase subunit c (84 aa).

2 helical membrane-spanning segments follow: residues 1 to 21 (MLAW…ALVG) and 53 to 73 (LLFA…VALI).

Belongs to the ATPase C chain family. As to quaternary structure, F-type ATPases have 2 components, F(1) - the catalytic core - and F(0) - the membrane proton channel. F(1) has five subunits: alpha(3), beta(3), gamma(1), delta(1), epsilon(1). F(0) has three main subunits: a(1), b(2) and c(10-14). The alpha and beta chains form an alternating ring which encloses part of the gamma chain. F(1) is attached to F(0) by a central stalk formed by the gamma and epsilon chains, while a peripheral stalk is formed by the delta and b chains.

The protein resides in the cell inner membrane. In terms of biological role, f(1)F(0) ATP synthase produces ATP from ADP in the presence of a proton or sodium gradient. F-type ATPases consist of two structural domains, F(1) containing the extramembraneous catalytic core and F(0) containing the membrane proton channel, linked together by a central stalk and a peripheral stalk. During catalysis, ATP synthesis in the catalytic domain of F(1) is coupled via a rotary mechanism of the central stalk subunits to proton translocation. Functionally, key component of the F(0) channel; it plays a direct role in translocation across the membrane. A homomeric c-ring of between 10-14 subunits forms the central stalk rotor element with the F(1) delta and epsilon subunits. This is ATP synthase subunit c from Dictyoglomus thermophilum (strain ATCC 35947 / DSM 3960 / H-6-12).